A 462-amino-acid chain; its full sequence is L-seryl-tRNA(Sec) selenium transferase (462 aa).

K293 carries the N6-(pyridoxal phosphate)lysine modification.

This sequence belongs to the SelA family. Requires pyridoxal 5'-phosphate as cofactor.

Its subcellular location is the cytoplasm. The enzyme catalyses L-seryl-tRNA(Sec) + selenophosphate + H(+) = L-selenocysteinyl-tRNA(Sec) + phosphate. It participates in aminoacyl-tRNA biosynthesis; selenocysteinyl-tRNA(Sec) biosynthesis; selenocysteinyl-tRNA(Sec) from L-seryl-tRNA(Sec) (bacterial route): step 1/1. In terms of biological role, converts seryl-tRNA(Sec) to selenocysteinyl-tRNA(Sec) required for selenoprotein biosynthesis. The protein is L-seryl-tRNA(Sec) selenium transferase of Clostridium botulinum (strain Langeland / NCTC 10281 / Type F).